The following is a 532-amino-acid chain: Sodium-dependent lysophosphatidylcholine symporter 1-A (532 aa).

At 1 to 40 the chain is on the cytoplasmic side; that stretch reads MARGEGAEQFSSGLLPTAKSVTQNEIKMVKLPKQQERKRA. Residues 41-70 form a helical membrane-spanning segment; sequence LTVWSKVCFAIGGAPYQITGTALGFFLQIF. Residues 71 to 81 lie on the Extracellular side of the membrane; that stretch reads LLDVAQLNPLN. A helical transmembrane segment spans residues 82–102; sequence ASVILFVGRAWDAVTDPTVGF. Residues 103–114 lie on the Cytoplasmic side of the membrane; that stretch reads LVSRTPWTRHGR. Residues 115-134 traverse the membrane as a helical segment; it reads MMPWILVSTIPAVLCYFLIW. Topologically, residues 135-144 are extracellular; sequence VVPPIEQGKM. A helical transmembrane segment spans residues 145–169; the sequence is MWYLLFYCLFQTLQTCFHVPYSALT. Residues 170 to 176 are Cytoplasmic-facing; it reads MFISTEQ. A helical transmembrane segment spans residues 177-208; sequence RERDSATAYRMTVEVFGTVVGTAIQGQIVGMA. Residues 209 to 232 lie on the Extracellular side of the membrane; the sequence is NTPCKNNTSPNNSSNDLIQSNNSH. Cysteines 212 and 464 form a disulfide. N-linked (GlcNAc...) asparagine glycosylation is found at asparagine 214, asparagine 220, and asparagine 229. A helical membrane pass occupies residues 233–266; the sequence is IPLKSNIFDERCAYMIASAVISLIYVVCAAVLFF. At 267–297 the chain is on the cytoplasmic side; the sequence is GVREQDVQGELKAQKRVSFQKGLRLVMGHGP. The chain crosses the membrane as a helical span at residues 298-324; sequence YVKLVLAFLFTSLAFMLLEGNFAVFIK. At 325–335 the chain is on the extracellular side; that stretch reads YTLGFREDFQN. Residues 336–354 traverse the membrane as a helical segment; that stretch reads ILLVIMVSATVSIPMWQWF. At 355-358 the chain is on the cytoplasmic side; that stretch reads LCRF. The chain crosses the membrane as a helical span at residues 359–380; it reads GKKTAVYIGITWAVPFMILVVS. Residues 381–383 are Extracellular-facing; sequence VNS. A helical transmembrane segment spans residues 384–420; sequence SLIVSYIVSIAAGVSVGAAFLLPWSMLPDVVDDFKLQ. Residues 421-430 lie on the Cytoplasmic side of the membrane; sequence NPTSQGHEAI. The helical transmembrane segment at 431–457 threads the bilayer; sequence FYSFYVFFTKFASGVSLGVSTLALSFA. The Extracellular portion of the chain corresponds to 458–469; the sequence is GYETGVCVQSDS. The helical transmembrane segment at 470 to 493 threads the bilayer; sequence VNLTLKLLVSAAPVSLIALGLLIF. Over 494-532 the chain is Cytoplasmic; sequence MTYPIDEERREYNNKQLQLLLRNEEEEDEMEVLKPDITA.

This sequence belongs to the major facilitator superfamily. In terms of tissue distribution, expressed in the developing nervous system.

The protein localises to the cell membrane. It localises to the endoplasmic reticulum membrane. It catalyses the reaction a 1-acyl-sn-glycero-3-phosphocholine(in) + Na(+)(in) = a 1-acyl-sn-glycero-3-phosphocholine(out) + Na(+)(out). It carries out the reaction 1-(4Z,7Z,10Z,13Z,16Z,19Z-docosahexaenoyl)-sn-glycero-3-phosphocholine(in) + Na(+)(in) = 1-(4Z,7Z,10Z,13Z,16Z,19Z-docosahexaenoyl)-sn-glycero-3-phosphocholine(out) + Na(+)(out). The catalysed reaction is 1-(9Z-octadecenoyl)-sn-glycero-3-phosphocholine(in) + Na(+)(in) = 1-(9Z-octadecenoyl)-sn-glycero-3-phosphocholine(out) + Na(+)(out). The enzyme catalyses 1-hexadecanoyl-sn-glycero-3-phosphocholine(in) + Na(+)(in) = 1-hexadecanoyl-sn-glycero-3-phosphocholine(out) + Na(+)(out). It catalyses the reaction a 1-acyl-sn-glycero-3-phosphoethanolamine(in) + Na(+)(in) = a 1-acyl-sn-glycero-3-phosphoethanolamine(out) + Na(+)(out). Functionally, sodium-dependent lysophosphatidylcholine (LPC) symporter, which plays an essential role for blood-brain barrier formation and function. Specifically expressed in endothelium of the blood-brain barrier of micro-vessels and transports LPC into the brain. Transport of LPC is essential because it constitutes the major mechanism by which docosahexaenoic acid (DHA), an omega-3 fatty acid that is essential for normal brain growth and cognitive function, enters the brain. Transports LPC carrying long-chain fatty acids such LPC oleate and LPC palmitate with a minimum acyl chain length of 14 carbons. Does not transport docosahexaenoic acid in unesterified fatty acid. The protein is Sodium-dependent lysophosphatidylcholine symporter 1-A (mfsd2aa) of Danio rerio (Zebrafish).